A 176-amino-acid polypeptide reads, in one-letter code: Large ribosomal subunit protein uL6 (176 aa).

The protein belongs to the universal ribosomal protein uL6 family. In terms of assembly, part of the 50S ribosomal subunit.

In terms of biological role, this protein binds to the 23S rRNA, and is important in its secondary structure. It is located near the subunit interface in the base of the L7/L12 stalk, and near the tRNA binding site of the peptidyltransferase center. In Methanosarcina mazei (strain ATCC BAA-159 / DSM 3647 / Goe1 / Go1 / JCM 11833 / OCM 88) (Methanosarcina frisia), this protein is Large ribosomal subunit protein uL6.